Reading from the N-terminus, the 2566-residue chain is Zinc finger protein GLI1 (2566 aa).

3 disordered regions span residues 349 to 375, 430 to 508, and 985 to 1046; these read HHSSGYVPNHTAPMLRGGKKRSHSQSS, DIRR…RSTG, and KSIE…GDPD. Composition is skewed to polar residues over residues 434 to 444 and 457 to 492; these read TLSSNGNSSHT and WSPNSPHSSGSGFDNYQTSSHKSLPLPSTLQTYQQH. Over residues 493–508 the composition is skewed to low complexity; sequence SGYTSTSGSSGNRSTG. Over residues 993–1016 the composition is skewed to polar residues; the sequence is WQNQNVFSSRRNSTRDPSNNNNSG. The segment covering 1023-1035 has biased composition (acidic residues); it reads DEPDVDDDEELDD. The segment at 1088–1110 adopts a C2H2-type 1; degenerate zinc-finger fold; it reads RECVRGTRPFKAQYMLVVHMRRH. 3 consecutive C2H2-type zinc fingers follow at residues 1116–1140, 1146–1171, and 1177–1202; these read HKCIFEGCIKRYSRLENLKTHLRSH, YQCEIPGCNKAFSNASDRAKHQNRTH, and YTCKVDGCSKRYTDPSSLRKHVKTVH. 5 disordered regions span residues 1254–1313, 1465–1491, 1650–1677, 1727–1791, and 2067–2091; these read GNSN…PRDS, LSTTSNPVQSLSPSIDNPINSTGTKQK, SKNMDNNSQTKNNNELNEENSPQSNQNE, AAAS…MDND, and MHFSPHSYVHSSSSNSSPFNSNRPH. Composition is skewed to low complexity over residues 1661–1677 and 1727–1743; these read NNNELNEENSPQSNQNE and AAASSGIGSGVTTTTAS. The segment covering 1752–1769 has biased composition (basic residues); that stretch reads NHHHQKQQPKHSHQHQNR. Residues 1770-1791 show a composition bias toward polar residues; sequence TKSINSDNNYSNQDNVSTMDND. Low complexity predominate over residues 2070-2090; sequence SPHSYVHSSSSNSSPFNSNRP.

This sequence belongs to the GLI C2H2-type zinc-finger protein family. In terms of tissue distribution, expressed in female-paired or unpaired males along the ventral surface in neurons and skin tegument cells. In virgin and mature females, expressed bilaterally along the edges of the body in neurons. In mature females, also expressed in skin tegument cells.

It is found in the nucleus. Its function is as follows. Probable transcription factor which plays an essential role in males to trigger female sexual development by inducing NRPS expression in male. NRPS produces the pheromone beta-alanyl-tryptamine (BATT), which stimulates female sexual development. This is Zinc finger protein GLI1 from Schistosoma mansoni (Blood fluke).